The chain runs to 321 residues: Nod factor export ATP-binding protein I (321 aa).

The ABC transporter domain maps to 17 to 247 (LSVEGLRKRY…EIGCDVVEVY (231 aa)). 49–56 (GPNGAGKT) lines the ATP pocket.

It belongs to the ABC transporter superfamily. Lipooligosaccharide exporter (TC 3.A.1.102) family. In terms of assembly, the complex is composed of two ATP-binding proteins (NodI) and two transmembrane proteins (NodJ).

The protein resides in the cell inner membrane. Part of the ABC transporter complex NodIJ involved in the export of the nodulation factors (Nod factors), the bacterial signal molecules that induce symbiosis and subsequent nodulation induction. Nod factors are LCO (lipo-chitin oligosaccharide), a modified beta-1,4-linked N-acetylglucosamine oligosaccharide. This subunit is responsible for energy coupling to the transport system. The polypeptide is Nod factor export ATP-binding protein I (Ralstonia nicotianae (strain ATCC BAA-1114 / GMI1000) (Ralstonia solanacearum)).